A 170-amino-acid polypeptide reads, in one-letter code: SKP1-like protein 16 (170 aa).

The interval 109 to 167 (ILAVNYLNVQDLLGLTCQTVADHMKDMSPEEVRELFNIENDYTPEEEDAIRKENAWAFE) is interaction with the F-box domain of F-box proteins.

The protein belongs to the SKP1 family. As to quaternary structure, part of a SCF (SKP1-cullin-F-box) protein ligase complex. Interacts with CPR1/CPR30, At3g61590 and At4g11590. In terms of tissue distribution, mainly detected in the siliques.

It localises to the nucleus. It participates in protein modification; protein ubiquitination. Functionally, involved in ubiquitination and subsequent proteasomal degradation of target proteins. Together with CUL1, RBX1 and a F-box protein, it forms a SCF E3 ubiquitin ligase complex. The functional specificity of this complex depends on the type of F-box protein. In the SCF complex, it serves as an adapter that links the F-box protein to CUL1. The sequence is that of SKP1-like protein 16 (ASK16) from Arabidopsis thaliana (Mouse-ear cress).